Reading from the N-terminus, the 397-residue chain is Protein RecA (397 aa).

The tract at residues 1–23 (MALETKPAKDPAAEDKHELDPKR) is disordered. 83-90 (GPESSGKT) is an ATP binding site.

It belongs to the RecA family.

The protein resides in the cytoplasm. Can catalyze the hydrolysis of ATP in the presence of single-stranded DNA, the ATP-dependent uptake of single-stranded DNA by duplex DNA, and the ATP-dependent hybridization of homologous single-stranded DNAs. It interacts with LexA causing its activation and leading to its autocatalytic cleavage. The protein is Protein RecA of Bifidobacterium longum (strain NCC 2705).